We begin with the raw amino-acid sequence, 116 residues long: S-adenosylmethionine decarboxylase proenzyme (116 aa).

The active-site Schiff-base intermediate with substrate; via pyruvic acid is Ser63. Pyruvic acid (Ser); by autocatalysis is present on Ser63. His68 functions as the Proton acceptor; for processing activity in the catalytic mechanism. Cys83 (proton donor; for catalytic activity) is an active-site residue.

Belongs to the prokaryotic AdoMetDC family. Type 1 subfamily. In terms of assembly, heterotetramer of two alpha and two beta chains arranged as a dimer of alpha/beta heterodimers. Pyruvate serves as cofactor. In terms of processing, is synthesized initially as an inactive proenzyme. Formation of the active enzyme involves a self-maturation process in which the active site pyruvoyl group is generated from an internal serine residue via an autocatalytic post-translational modification. Two non-identical subunits are generated from the proenzyme in this reaction, and the pyruvate is formed at the N-terminus of the alpha chain, which is derived from the carboxyl end of the proenzyme. The post-translation cleavage follows an unusual pathway, termed non-hydrolytic serinolysis, in which the side chain hydroxyl group of the serine supplies its oxygen atom to form the C-terminus of the beta chain, while the remainder of the serine residue undergoes an oxidative deamination to produce ammonia and the pyruvoyl group blocking the N-terminus of the alpha chain.

The catalysed reaction is S-adenosyl-L-methionine + H(+) = S-adenosyl 3-(methylsulfanyl)propylamine + CO2. The protein operates within amine and polyamine biosynthesis; S-adenosylmethioninamine biosynthesis; S-adenosylmethioninamine from S-adenosyl-L-methionine: step 1/1. Functionally, catalyzes the decarboxylation of S-adenosylmethionine to S-adenosylmethioninamine (dcAdoMet), the propylamine donor required for the synthesis of the polyamines spermine and spermidine from the diamine putrescine. This chain is S-adenosylmethionine decarboxylase proenzyme, found in Clostridium botulinum (strain 657 / Type Ba4).